The sequence spans 957 residues: MSLVSQNSRRRRRRVAKATAHNSSWDEMQAPNAPGFPADMPGSDVPQGPSDSQILQGLCASEGPSTSVLPTSAEGPSTFVPPTISEASSASGQPTVSEGPGTSLLATPSEGLSTSGPPTISKGLCTSVTLAASEGRNTSRPPTSSEEPSTSVPATPGEGTSTSVPPTASEGPSTSVVPTPDEGPSTSVQSTAGEGPSTPVPLTATEGLSTSVPDTPDEGLSTSVPPTATEGLSTPVPPTPDEGPSTSMPATPGEGRSTTMLPAASDGQSISLVPTPGKGSSTSGPPTATEGLSTSVQPTAGEGPSTSVPPTPCGGLSTSVPPTPGEGLSTSVPPTATEGLSTSVPPTPGEGPSTSVLPTPGEGRSTSVPPTASDGSDTSVPPTPGEGPSTLVQPTASDRPGSSVLPNPGEGPSTLFSSSASVDRNPSKCSIVLPSPRVTKASVDSDSEGPKGAEGPIEFEVLRDCESPNSITIMGLSTPRVAITLKPQDPMEQNVAELLQFLLVKDQSKYPIRESEMREYIVKEYRNQFPEILRRAAAHLECIFRFELRELDPEARTYILLNKLGPVPFEGLEESPNGPKMGLLMMILGQIFLNGNQAKEAEICEMLWRMGVQRERRLSIFGNPKRLLSVEFVWQRYLDYRPVTDCKPVEYEFFWGPRSHLETTKMKILKFMAKIYNKDPMDWPEQYNEALEEDAARAFAEGWQALPHFRRPFFEEAAAEVASPDSEVSSYSSKYAPHSWPESRLESKARKLVQLFLLMDSTKLPIPKEGILYYIGRECSKVFPDLLNRAARTLNHVYGTELVVLDPRNHSYTLYNRREMEETEEIVDSPNRPGNNFLMQVLSFIFIMGNHARESAVWAFLRGLGVQSGRKHVITCRYLSQRYIDSLRVPDSDPVQYEFVWGPRARLETSKMKALRYVARIHRKEPQDWPQQYREAMEDEANRADVGHRQFFVHNFR.

Residues 1–433 (MSLVSQNSRR…RNPSKCSIVL (433 aa)) are disordered. Polar residues-rich tracts occupy residues 85 to 96 (SEASSASGQPTV) and 104 to 130 (LLAT…SVTL). Positions 138–156 (TSRPPTSSEEPSTSVPATP) are enriched in low complexity. Composition is skewed to polar residues over residues 158–177 (EGTS…TSVV), 220–232 (LSTS…TEGL), 256–306 (RSTT…GPST), 328–344 (LSTS…STSV), 364–380 (RSTS…DTSV), and 414–428 (TLFS…NPSK). MAGE domains follow at residues 491–690 (MEQN…YNEA) and 745–936 (LESK…YREA). An interaction with DTNA region spans residues 743 to 957 (SRLESKARKL…HRQFFVHNFR (215 aa)).

In terms of assembly, interacts with DTNA. Interacts with TRIM28.

It is found in the cytoplasm. It localises to the perinuclear region. The protein localises to the nucleus. Its subcellular location is the cell membrane. Functionally, may enhance ubiquitin ligase activity of RING-type zinc finger-containing E3 ubiquitin-protein ligases. Proposed to act through recruitment and/or stabilization of the Ubl-conjugating enzyme (E2) at the E3:substrate complex. In Macaca fascicularis (Crab-eating macaque), this protein is Melanoma-associated antigen E1 (MAGEE1).